A 511-amino-acid polypeptide reads, in one-letter code: Chromosomal replication initiator protein DnaA (511 aa).

The interval 1–90 (MSVELWQQCV…KRSSAPRAAP (90 aa)) is domain I, interacts with DnaA modulators. The domain II stretch occupies residues 91–174 (NAPLAAAASQ…QVEGALKHTS (84 aa)). The disordered stretch occupies residues 133 to 162 (VAAHDEPSRDSFDPMAGASSQQAPARAEQR). Residues 135 to 144 (AHDEPSRDSF) show a composition bias toward basic and acidic residues. Residues 175–391 (YLNRTFTFEN…GALKRVIAHS (217 aa)) form a domain III, AAA+ region region. Residues G219, G221, K222, and T223 each coordinate ATP. The segment at 392–511 (HFMGRDITIE…YKNLLRTLTT (120 aa)) is domain IV, binds dsDNA.

The protein belongs to the DnaA family. In terms of assembly, oligomerizes as a right-handed, spiral filament on DNA at oriC.

Its subcellular location is the cytoplasm. In terms of biological role, plays an essential role in the initiation and regulation of chromosomal replication. ATP-DnaA binds to the origin of replication (oriC) to initiate formation of the DNA replication initiation complex once per cell cycle. Binds the DnaA box (a 9 base pair repeat at the origin) and separates the double-stranded (ds)DNA. Forms a right-handed helical filament on oriC DNA; dsDNA binds to the exterior of the filament while single-stranded (ss)DNA is stabiized in the filament's interior. The ATP-DnaA-oriC complex binds and stabilizes one strand of the AT-rich DNA unwinding element (DUE), permitting loading of DNA polymerase. After initiation quickly degrades to an ADP-DnaA complex that is not apt for DNA replication. Binds acidic phospholipids. This Pseudomonas savastanoi pv. phaseolicola (strain 1448A / Race 6) (Pseudomonas syringae pv. phaseolicola (strain 1448A / Race 6)) protein is Chromosomal replication initiator protein DnaA.